Reading from the N-terminus, the 267-residue chain is MTKTKIMGILNVTPDSFSDGGKFNNVETAINRVKAMIDEGADIIDVGGVSTRPGHEMVTLEEELNRVLPVVEAIVGFDVKISVDTFRSEVAEACLKLGVDMINDQWAGLYDHRMFQIVAKYDAEIILMHNGNGNRDEPVVEEMLTSLLAQAHQAKIAGIPSNKIWLDPGIGFAKTRNEEAEVMARLDELVATEYPVLLATSRKRFTKEMMGYDTTPVERDEVTAATTAYGIMKGVRAVRVHNVELNAKLAKGIDFLKENENARHNLS.

The Pterin-binding domain occupies 1–251 (MTKTKIMGIL…NVELNAKLAK (251 aa)). N11 is a binding site for Mg(2+). (7,8-dihydropterin-6-yl)methyl diphosphate-binding positions include T51, D84, N103, D167, K203, and 239–241 (RVH).

It belongs to the DHPS family. Homodimer. Requires Mg(2+) as cofactor.

It carries out the reaction (7,8-dihydropterin-6-yl)methyl diphosphate + 4-aminobenzoate = 7,8-dihydropteroate + diphosphate. It functions in the pathway cofactor biosynthesis; tetrahydrofolate biosynthesis; 7,8-dihydrofolate from 2-amino-4-hydroxy-6-hydroxymethyl-7,8-dihydropteridine diphosphate and 4-aminobenzoate: step 1/2. Catalyzes the condensation of para-aminobenzoate (pABA) with 6-hydroxymethyl-7,8-dihydropterin diphosphate (DHPt-PP) to form 7,8-dihydropteroate (H2Pte), the immediate precursor of folate derivatives. The protein is Dihydropteroate synthase (folP) of Staphylococcus aureus (strain Mu50 / ATCC 700699).